Here is a 231-residue protein sequence, read N- to C-terminus: Phosphatidylserine decarboxylase proenzyme (231 aa).

Residue Ser-188 is the Schiff-base intermediate with substrate; via pyruvic acid of the active site. Ser-188 carries the pyruvic acid (Ser); by autocatalysis modification.

Belongs to the phosphatidylserine decarboxylase family. PSD-A subfamily. In terms of assembly, heterodimer of a large membrane-associated beta subunit and a small pyruvoyl-containing alpha subunit. The cofactor is pyruvate. Post-translationally, is synthesized initially as an inactive proenzyme. Formation of the active enzyme involves a self-maturation process in which the active site pyruvoyl group is generated from an internal serine residue via an autocatalytic post-translational modification. Two non-identical subunits are generated from the proenzyme in this reaction, and the pyruvate is formed at the N-terminus of the alpha chain, which is derived from the carboxyl end of the proenzyme. The post-translation cleavage follows an unusual pathway, termed non-hydrolytic serinolysis, in which the side chain hydroxyl group of the serine supplies its oxygen atom to form the C-terminus of the beta chain, while the remainder of the serine residue undergoes an oxidative deamination to produce ammonia and the pyruvoyl prosthetic group on the alpha chain.

It is found in the cell membrane. The enzyme catalyses a 1,2-diacyl-sn-glycero-3-phospho-L-serine + H(+) = a 1,2-diacyl-sn-glycero-3-phosphoethanolamine + CO2. It participates in phospholipid metabolism; phosphatidylethanolamine biosynthesis; phosphatidylethanolamine from CDP-diacylglycerol: step 2/2. Functionally, catalyzes the formation of phosphatidylethanolamine (PtdEtn) from phosphatidylserine (PtdSer). This chain is Phosphatidylserine decarboxylase proenzyme, found in Rickettsia africae (strain ESF-5).